The sequence spans 152 residues: MIFTKEPAHVFYVLVSAFRSNLCDEVNMSRHRHMVSTLRAAPGLYGSVESTDLTGCYREAISSAPTEEKTVRVRCKDKAQALNVARLACNEWEQDCVLVYKSQTHTAGLVYAKGIDGYKAERLPGSFQEVPKGAPLQGCFTIDEFGRRWQVQ.

In terms of assembly, homotetramer. Interacts with host METK; this interaction induces the polymerization of METK into filaments that are enzymatically inactive.

It catalyses the reaction S-adenosyl-L-methionine = L-homoserine lactone + S-methyl-5'-thioadenosine. Its function is as follows. Degrades the intracellular SAM pools of the host cell and inhibits the host S-adenosylmethionine synthase METK/MAT, thereby preventing methylation of the viral genome. Induces the polymerization of METK into filaments that are enzymatically inactive. Keeping the viral genome in an unmethylated state allows the phage to shift from a lytic infection under normal growth conditions to a transient lysogenic infection under glucose starvation, by blocking its own expression. Does not protect the virus immune against host restriction-modification systems. This chain is S-Adenosylmethionine lyase, found in Escherichia coli (Bacteriophage T3).